A 922-amino-acid chain; its full sequence is MATIGPSGLHPGERASVCPHEGVPRPSGSLELECLQQFKVTRTQLQQIQASLLCSMEQALKGQDSPAPSVRMLPTYVRSTPHGTEQGDFLVLELGATGASLRVLWVTLTGTKECRVEPRSREFVIPQEVILGAGQQLFDFAARCLSEFLDAYPVENQGLKLGFNFSFPCHQTGLDRSTLISWTKGFRCSGVEGQDVVQLLRDAIQRQGTYRIDVVAMVNDTVGTMMGCELGTRPCEVGLIVDTGTNACYMEEARHVAALDEDRGRTCVSIEWGSFYDEDALGPVLTTFDSALDRESLTPGAQRFEKMIGGLYLGELVRLVLVHLTQHGVLFDGCASPALLSQGCILLDHVAEMEDTATGTARVHTILQDLGLSPRASDAELVQYVCVAVCTRAAQLCAAALAAVLSRLQHSREQQTLQVAVATGGRVFERHPRFLRILKETVTLLAPNCDVSFIPSVDGGGRGVAMVTAVAARLAAHRRILEETLAPFQLTLEQMTVVQAQMREAMIRGLQGEASSLRMLPTYVRATPDGSERGDFLALDLGGTNFRVLLVRVAEGSVQIINQVYSIPECRAQGSGQKLFDHIVDCIVDFQKRQGLSGQSLPLGFTFSFPCKQLGLDQGILLNWTKGFNASGCEGQDVVYLLREAIRRRQAVELNVVAIVNDTVGTMMSCGYDDPRCEMGLIVGTGTNACYMEELRNVASVPGDSGLMCINMEWGAFGDDGSLGTLSTRFDTSVDQASINPGKQRFEKMISGMYLGEIVRHILLHLTNLGVLFRGQKTQCLQARDIFKTKFLSEIESDSLALRQVRAILEDLGLTLTSDDALMVLEVCQAVSRRAAQLCGAGVAAVVEKIRENRGLQELTVSVGVDGTLYKLHPHFSKLVSATVRKLAPQCTVTFLQSEDGSGKGAALVTAVACRLTQMAHV.

The segment at 1–23 is disordered; that stretch reads MATIGPSGLHPGERASVCPHEGV. Hexokinase domains lie at 25-469 and 475-911; these read RPSG…MVTA and AAHR…LVTA. Positions 82–218 are hexokinase small subdomain 1; that stretch reads HGTEQGDFLV…TYRIDVVAMV (137 aa). Position 93–100 (93–100) interacts with ATP; that stretch reads ELGATGAS. 93-102 serves as a coordination point for D-glucose 6-phosphate; the sequence is ELGATGASLR. D-glucose contacts are provided by residues Ser-166, 183-184, and 219-220; these read TK and ND. Residues 219–458 are hexokinase large subdomain 1; it reads NDTVGTMMGC…CDVSFIPSVD (240 aa). The D-glucose 6-phosphate site is built by Asp-220 and Thr-243. D-glucose is bound by residues Asn-246, Glu-271, and 302-305; that span reads QRFE. Position 424–426 (424–426) interacts with D-glucose 6-phosphate; that stretch reads GGR. ATP is bound by residues 436–437 and 540–545; these read RI and DLGGTN. A hexokinase small subdomain 2 region spans residues 529–660; it reads DGSERGDFLA…AVELNVVAIV (132 aa). 540 to 544 serves as a coordination point for D-glucose 6-phosphate; sequence DLGGT. D-glucose contacts are provided by residues 608–609, 625–626, and 661–662; these read SF, TK, and ND. Positions 661 to 900 are hexokinase large subdomain 2; the sequence is NDTVGTMMSC…CTVTFLQSED (240 aa). D-glucose 6-phosphate-binding residues include Asp-662 and Thr-685. Thr-685 is an ATP binding site. Residues 687-688, Glu-713, and Glu-747 contribute to the D-glucose site; that span reads TN. Residues 752–753, 789–793, and 868–872 contribute to the ATP site; these read GM, TKFLS, and TLYKL. Residues 866-868 and Ser-902 each bind D-glucose 6-phosphate; that span reads DGT.

This sequence belongs to the hexokinase family.

It carries out the reaction a D-hexose + ATP = a D-hexose 6-phosphate + ADP + H(+). The enzyme catalyses D-fructose + ATP = D-fructose 6-phosphate + ADP + H(+). It catalyses the reaction D-glucose + ATP = D-glucose 6-phosphate + ADP + H(+). It participates in carbohydrate metabolism; hexose metabolism. Its pathway is carbohydrate degradation; glycolysis; D-glyceraldehyde 3-phosphate and glycerone phosphate from D-glucose: step 1/4. Hexokinase is an allosteric enzyme inhibited by its product D-glucose 6-phosphate. In terms of biological role, catalyzes the phosphorylation of hexose, such as D-glucose and D-fructose, to hexose 6-phosphate (D-glucose 6-phosphate and D-fructose 6-phosphate, respectively). Mediates the initial step of glycolysis by catalyzing phosphorylation of D-glucose to D-glucose 6-phosphate. The protein is Hexokinase-3 of Mus musculus (Mouse).